Consider the following 236-residue polypeptide: Geranylgeranylglyceryl phosphate synthase (236 aa).

Lys13 lines the sn-glycerol 1-phosphate pocket. Asp15 and Thr42 together coordinate Mg(2+). Residues 161–166 (YVEYSG), Gly191, and 211–212 (GD) each bind sn-glycerol 1-phosphate.

This sequence belongs to the GGGP/HepGP synthase family. Group I subfamily. Requires Mg(2+) as cofactor.

Its subcellular location is the cytoplasm. The catalysed reaction is sn-glycerol 1-phosphate + (2E,6E,10E)-geranylgeranyl diphosphate = sn-3-O-(geranylgeranyl)glycerol 1-phosphate + diphosphate. It functions in the pathway membrane lipid metabolism; glycerophospholipid metabolism. Functionally, prenyltransferase that catalyzes the transfer of the geranylgeranyl moiety of geranylgeranyl diphosphate (GGPP) to the C3 hydroxyl of sn-glycerol-1-phosphate (G1P). This reaction is the first ether-bond-formation step in the biosynthesis of archaeal membrane lipids. The chain is Geranylgeranylglyceryl phosphate synthase from Halobacterium salinarum (strain ATCC 700922 / JCM 11081 / NRC-1) (Halobacterium halobium).